A 918-amino-acid chain; its full sequence is Interleukin-6 receptor subunit beta (918 aa).

Positions 1 to 22 (MLTLQTWLVQALFIFLTTESTG) are cleaved as a signal peptide. Over 23 to 619 (ELLDPCGYIS…TPKFAQGEIE (597 aa)) the chain is Extracellular. The 95-residue stretch at 26–120 (DPCGYISPES…LEQNVYGITI (95 aa)) folds into the Ig-like C2-type domain. 2 disulfide bridges follow: Cys-28–Cys-54 and Cys-48–Cys-103. N-linked (GlcNAc...) asparagine glycans are attached at residues Asn-43, Asn-83, and Asn-131. 5 consecutive Fibronectin type-III domains span residues 125–216 (PPEK…NFDP), 224–324 (PPHN…TYED), 329–424 (APSF…FQAT), 426–517 (PVMD…LKQA), and 518–613 (PPSK…TPKF). Cys-134 and Cys-144 are disulfide-bonded. Residue Asn-157 is glycosylated (N-linked (GlcNAc...) asparagine). A disulfide bridge connects residues Cys-172 and Cys-182. Residue Asn-227 is glycosylated (N-linked (GlcNAc...) asparagine). A WSXWS motif motif is present at residues 310–314 (WSDWS). Asn-379 and Asn-383 each carry an N-linked (GlcNAc...) asparagine glycan. Residue Asn-390 is glycosylated (N-linked (GlcNAc...) (complex) asparagine). An intrachain disulfide couples Cys-458 to Cys-466. Asn-553 and Asn-564 each carry an N-linked (GlcNAc...) asparagine glycan. Residues 620-641 (AIVVPVCLAFLLTTLLGVLFCF) form a helical membrane-spanning segment. Over 642–918 (NKRDLIKKHI…TVRQGGYMPQ (277 aa)) the chain is Cytoplasmic. Positions 651–659 (IWPNVPDPS) match the Box 1 motif motif. Disordered regions lie at residues 660–681 (KSHI…SKDQ) and 722–758 (EGHS…STVQ). Residues Ser-661 and Ser-667 each carry the phosphoserine modification. Residues 731 to 755 (SSCMSSSRPSISSSDENESSQNTSS) are compositionally biased toward low complexity. Ser-782, Ser-789, Ser-829, and Ser-839 each carry phosphoserine.

It belongs to the type I cytokine receptor family. Type 2 subfamily. As to quaternary structure, component of a hexamer of two molecules each of IL6, IL6R and IL6ST; associates with the complex IL6:IL6R but does not interact with IL6. Forms heterodimers composed of LIFR and IL6ST (type I OSM receptor) which are activated by LIF and OSM. Also forms heterodimers composed of OSMR and IL6ST (type II receptor) which are activated by OSM but not by LIF. Component of a receptor complex composed of IL6ST/GP130, IL27RA/WSX1 and CNTFR which interacts with the neuroprotective peptide humanin. Interacts with HCK. Interacts with INPP5D/SHIP1. Interacts with SRC and YES. Interacts with ARMH4; this interaction prevents IL6ST protein homodimerization and bridges ARMH4 with IL6R and STAT3 and therefore inhibits phosphorylation of STAT3 at 'Tyr-705'. In terms of assembly, (Microbial infection) The homodimer binds two molecules of herpes virus 8/HHV-8 protein vIL-6. Phosphorylation of Ser-782 down-regulates cell surface expression. Post-translationally, heavily N-glycosylated. Glycosylation is required for protein stability and localization in plasma membrane but not for ligand binding. In terms of tissue distribution, found in all the tissues and cell lines examined. Expression not restricted to IL6 responsive cells. As to expression, expressed in blood serum (at protein level).

It is found in the cell membrane. The protein resides in the secreted. Functionally, signal-transducing molecule. The receptor systems for IL6, LIF, OSM, CNTF, IL11, CTF1 and BSF3 can utilize IL6ST for initiating signal transmission. Binding of IL6 to IL6R induces IL6ST homodimerization and formation of a high-affinity receptor complex, which activates the intracellular JAK-MAPK and JAK-STAT3 signaling pathways. That causes phosphorylation of IL6ST tyrosine residues which in turn activates STAT3. In parallel, the IL6 signaling pathway induces the expression of two cytokine receptor signaling inhibitors, SOCS1 and SOCS3, which inhibit JAK and terminate the activity of the IL6 signaling pathway as a negative feedback loop. Also activates the yes-associated protein 1 (YAP) and NOTCH pathways to control inflammation-induced epithelial regeneration, independently of STAT3. Acts as a receptor for the neuroprotective peptide humanin as part of a complex with IL27RA/WSX1 and CNTFR. Mediates signals which regulate immune response, hematopoiesis, pain control and bone metabolism. Has a role in embryonic development. Essential for survival of motor and sensory neurons and for differentiation of astrocytes. Required for expression of TRPA1 in nociceptive neurons. Required for the maintenance of PTH1R expression in the osteoblast lineage and for the stimulation of PTH-induced osteoblast differentiation. Required for normal trabecular bone mass and cortical bone composition. In terms of biological role, binds to the soluble IL6:sIL6R complex (hyper-IL6), thereby blocking IL6 trans-signaling. Inhibits sIL6R-dependent acute phase response. Also blocks IL11 cluster signaling through IL11R. In Homo sapiens (Human), this protein is Interleukin-6 receptor subunit beta.